The primary structure comprises 128 residues: Small ribosomal subunit protein uS9 (128 aa).

The protein belongs to the universal ribosomal protein uS9 family.

This chain is Small ribosomal subunit protein uS9, found in Flavobacterium psychrophilum (strain ATCC 49511 / DSM 21280 / CIP 103535 / JIP02/86).